We begin with the raw amino-acid sequence, 60 residues long: Small ribosomal subunit protein bS21 (60 aa).

A disordered region spans residues 35 to 60 (REHYEKPSVKRKKKSEAARRRKSKVR). Residues 43–60 (VKRKKKSEAARRRKSKVR) are compositionally biased toward basic residues.

It belongs to the bacterial ribosomal protein bS21 family.

In Clostridium novyi (strain NT), this protein is Small ribosomal subunit protein bS21.